Here is an 878-residue protein sequence, read N- to C-terminus: Bifunctional heparan sulfate N-deacetylase/N-sulfotransferase 1 (878 aa).

Over 1-17 (MSLSLKTRRFGRPVRPQ) the chain is Cytoplasmic. The sufficient for localization to Golgi membrane stretch occupies residues 1–169 (MSLSLKTRRF…VEYGVGIIGF (169 aa)). Residues 18–38 (LVLLLLFALCLLSVFISAYYL) traverse the membrane as a helical; Signal-anchor for type II membrane protein segment. Over 39-878 (YGWKRGLEPS…WLREELQNTR (840 aa)) the chain is Lumenal. The segment at 40-594 (GWKRGLEPSG…KRHKDIWSKE (555 aa)) is heparan sulfate N-deacetylase 1. 3 N-linked (GlcNAc...) asparagine glycosylation sites follow: Asn231, Asn347, and Asn397. Residues 595–878 (KTCDRFPKLL…WLREELQNTR (284 aa)) are heparan sulfate N-sulfotransferase 1. Lys610 serves as the catalytic For sulfotransferase activity. 610 to 614 (KTGTT) lines the adenosine 3',5'-bisphosphate pocket. Asn663 is a glycosylation site (N-linked (GlcNAc...) asparagine). Positions 708 and 813 each coordinate adenosine 3',5'-bisphosphate. A disulfide bridge connects residues Cys814 and Cys824. 829–833 (KGRKY) is a binding site for adenosine 3',5'-bisphosphate.

Belongs to the sulfotransferase 1 family. NDST subfamily. As to quaternary structure, monomer.

The protein localises to the golgi apparatus membrane. It localises to the golgi apparatus. It is found in the trans-Golgi network membrane. It catalyses the reaction alpha-D-glucosaminyl-[heparan sulfate](n) + 3'-phosphoadenylyl sulfate = N-sulfo-alpha-D-glucosaminyl-[heparan sulfate](n) + adenosine 3',5'-bisphosphate + 2 H(+). It functions in the pathway glycan metabolism; heparan sulfate biosynthesis. The protein operates within glycan metabolism; heparin biosynthesis. Its function is as follows. Essential bifunctional enzyme that catalyzes both the N-deacetylation and the N-sulfation of glucosamine (GlcNAc) of the glycosaminoglycan in heparan sulfate. Modifies the GlcNAc-GlcA disaccharide repeating sugar backbone to make N-sulfated heparosan, a prerequisite substrate for later modifications in heparin biosynthesis. Plays a role in determining the extent and pattern of sulfation of heparan sulfate. In Xenopus laevis (African clawed frog), this protein is Bifunctional heparan sulfate N-deacetylase/N-sulfotransferase 1 (ndst1).